The following is an 875-amino-acid chain: Alanine--tRNA ligase (875 aa).

Zn(2+) is bound by residues His562, His566, Cys665, and His669.

It belongs to the class-II aminoacyl-tRNA synthetase family. It depends on Zn(2+) as a cofactor.

Its subcellular location is the cytoplasm. The enzyme catalyses tRNA(Ala) + L-alanine + ATP = L-alanyl-tRNA(Ala) + AMP + diphosphate. In terms of biological role, catalyzes the attachment of alanine to tRNA(Ala) in a two-step reaction: alanine is first activated by ATP to form Ala-AMP and then transferred to the acceptor end of tRNA(Ala). Also edits incorrectly charged Ser-tRNA(Ala) and Gly-tRNA(Ala) via its editing domain. This is Alanine--tRNA ligase from Saccharophagus degradans (strain 2-40 / ATCC 43961 / DSM 17024).